The primary structure comprises 493 residues: Aspartate-semialdehyde dehydrogenase (Non-phosphorylating) (493 aa).

NADP(+) contacts are provided by residues 160 to 161, 184 to 187, and 237 to 238; these read WN, KPAH, and GS. Residue E259 is the Proton acceptor of the active site. Residue L260 participates in NADP(+) binding. Catalysis depends on C293, which acts as the Nucleophile. E390 contributes to the NADP(+) binding site.

Belongs to the aldehyde dehydrogenase family.

It is found in the cytoplasm. It catalyses the reaction L-aspartate 4-semialdehyde + NAD(+) + H2O = L-aspartate + NADH + 2 H(+). Involved in the degradation of ectoine, which allows H.elongata to utilize ectoine as both a carbon and a nitrogen source for growth. Probably catalyzes the NAD(+)-dependent oxidation of L-aspartate-semialdehyde to L-aspartate. This chain is Aspartate-semialdehyde dehydrogenase (Non-phosphorylating), found in Halomonas elongata (strain ATCC 33173 / DSM 2581 / NBRC 15536 / NCIMB 2198 / 1H9).